Here is a 660-residue protein sequence, read N- to C-terminus: Bifunctional polymyxin resistance protein ArnA (660 aa).

The segment at 1-304 is formyltransferase ArnAFT; the sequence is MKTVVFAYHD…TLGLVQGSRL (304 aa). 86–88 contacts (6R)-10-formyltetrahydrofolate; the sequence is HLI. His104 serves as the catalytic Proton donor; for formyltransferase activity. (6R)-10-formyltetrahydrofolate-binding positions include Arg114 and 136–140; that span reads VKRAD. The dehydrogenase ArnADH stretch occupies residues 314–660; it reads RRTRVLILGV…RTVDLTDKPS (347 aa). Residues Asp347 and 368 to 369 contribute to the NAD(+) site; that span reads DI. Residues Ala393, Tyr398, and 432–433 each bind UDP-alpha-D-glucuronate; that span reads TS. Catalysis depends on Glu434, which acts as the Proton acceptor; for decarboxylase activity. UDP-alpha-D-glucuronate-binding positions include Arg460, Asn492, 526 to 535, and Tyr613; that span reads KLIDGGKQKR. Arg619 (proton donor; for decarboxylase activity) is an active-site residue.

The protein in the N-terminal section; belongs to the Fmt family. UDP-L-Ara4N formyltransferase subfamily. This sequence in the C-terminal section; belongs to the NAD(P)-dependent epimerase/dehydratase family. UDP-glucuronic acid decarboxylase subfamily. Homohexamer, formed by a dimer of trimers.

The enzyme catalyses UDP-alpha-D-glucuronate + NAD(+) = UDP-beta-L-threo-pentopyranos-4-ulose + CO2 + NADH. It carries out the reaction UDP-4-amino-4-deoxy-beta-L-arabinose + (6R)-10-formyltetrahydrofolate = UDP-4-deoxy-4-formamido-beta-L-arabinose + (6S)-5,6,7,8-tetrahydrofolate + H(+). It participates in nucleotide-sugar biosynthesis; UDP-4-deoxy-4-formamido-beta-L-arabinose biosynthesis; UDP-4-deoxy-4-formamido-beta-L-arabinose from UDP-alpha-D-glucuronate: step 1/3. It functions in the pathway nucleotide-sugar biosynthesis; UDP-4-deoxy-4-formamido-beta-L-arabinose biosynthesis; UDP-4-deoxy-4-formamido-beta-L-arabinose from UDP-alpha-D-glucuronate: step 3/3. Its pathway is bacterial outer membrane biogenesis; lipopolysaccharide biosynthesis. Its function is as follows. Bifunctional enzyme that catalyzes the oxidative decarboxylation of UDP-glucuronic acid (UDP-GlcUA) to UDP-4-keto-arabinose (UDP-Ara4O) and the addition of a formyl group to UDP-4-amino-4-deoxy-L-arabinose (UDP-L-Ara4N) to form UDP-L-4-formamido-arabinose (UDP-L-Ara4FN). The modified arabinose is attached to lipid A and is required for resistance to polymyxin and cationic antimicrobial peptides. In Escherichia coli (strain SMS-3-5 / SECEC), this protein is Bifunctional polymyxin resistance protein ArnA.